The following is a 754-amino-acid chain: 5-methyltetrahydropteroyltriglutamate--homocysteine methyltransferase (754 aa).

5-methyltetrahydropteroyltri-L-glutamate-binding positions include 15–18 and Lys-114; that span reads RELK. Residues 430–432 and Glu-483 contribute to the L-homocysteine site; that span reads IGS. L-methionine is bound by residues 430-432 and Glu-483; that span reads IGS. 5-methyltetrahydropteroyltri-L-glutamate is bound by residues 514–515 and Trp-560; that span reads RC. Asp-598 contacts L-homocysteine. Asp-598 is a binding site for L-methionine. Glu-604 provides a ligand contact to 5-methyltetrahydropteroyltri-L-glutamate. Zn(2+)-binding residues include His-641, Cys-643, and Glu-665. His-694 functions as the Proton donor in the catalytic mechanism. Cys-726 serves as a coordination point for Zn(2+).

This sequence belongs to the vitamin-B12 independent methionine synthase family. Zn(2+) serves as cofactor.

It catalyses the reaction 5-methyltetrahydropteroyltri-L-glutamate + L-homocysteine = tetrahydropteroyltri-L-glutamate + L-methionine. It functions in the pathway amino-acid biosynthesis; L-methionine biosynthesis via de novo pathway; L-methionine from L-homocysteine (MetE route): step 1/1. Its function is as follows. Catalyzes the transfer of a methyl group from 5-methyltetrahydrofolate to homocysteine resulting in methionine formation. In Campylobacter jejuni subsp. jejuni serotype O:23/36 (strain 81-176), this protein is 5-methyltetrahydropteroyltriglutamate--homocysteine methyltransferase.